Reading from the N-terminus, the 179-residue chain is Large ribosomal subunit protein uL5 (179 aa).

Contacts the P site tRNA. Forms a bridge to the 30S subunit in the 70S ribosome. Part of the 50S ribosomal subunit. Part of the 5S rRNA/L5/L18 subcomplex; in this organism only 2 proteins, L5 and L18 have been shown to be part of the 5S rRNA subcomplex, unlike E.coli and T.thermophilus where L25 (TL5) is also found. Has been shown to bind 5S rRNA.

This is one of the proteins that bind and probably mediate the attachment of the 5S RNA into the large ribosomal subunit, where it forms part of the central protuberance. In the 70S ribosome it contacts protein S13 of the 30S subunit (bridge B1b), connecting the 2 subunits; this bridge is implicated in subunit movement. Contacts the P site tRNA; the 5S rRNA and some of its associated proteins might help stabilize positioning of ribosome-bound tRNAs. This Geobacillus stearothermophilus (Bacillus stearothermophilus) protein is Large ribosomal subunit protein uL5 (rplE).